Here is a 116-residue protein sequence, read N- to C-terminus: Large ribosomal subunit protein bL19 (116 aa).

This sequence belongs to the bacterial ribosomal protein bL19 family.

Functionally, this protein is located at the 30S-50S ribosomal subunit interface and may play a role in the structure and function of the aminoacyl-tRNA binding site. The sequence is that of Large ribosomal subunit protein bL19 from Pseudothermotoga lettingae (strain ATCC BAA-301 / DSM 14385 / NBRC 107922 / TMO) (Thermotoga lettingae).